The chain runs to 65 residues: Conotoxin Cal1.3 (65 aa).

The first 18 residues, 1–18, serve as a signal peptide directing secretion; that stretch reads MRCLPVFIILLLLASTAA. The propeptide occupies 19-49; it reads VDVAGSKLKRRLERKPYQGSQAYVKKTAFGL. Disulfide bonds link Cys-52/Cys-62 and Cys-53/Cys-59. Pro-61 bears the 4-hydroxyproline mark. Cys-62 is subject to Cysteine amide.

The protein belongs to the conotoxin T superfamily. As to expression, expressed by the venom duct.

It is found in the secreted. In terms of biological role, probable neurotoxin with unknown target. Possibly targets ion channels. This chain is Conotoxin Cal1.3, found in Californiconus californicus (California cone).